Consider the following 142-residue polypeptide: Putative pre-16S rRNA nuclease (142 aa).

This sequence belongs to the YqgF nuclease family.

The protein resides in the cytoplasm. Its function is as follows. Could be a nuclease involved in processing of the 5'-end of pre-16S rRNA. In Malacoplasma penetrans (strain HF-2) (Mycoplasma penetrans), this protein is Putative pre-16S rRNA nuclease.